Reading from the N-terminus, the 442-residue chain is Protein PRRC1-A (442 aa).

Residues methionine 1–alanine 27 are disordered.

This sequence belongs to the PRRC1 family.

The protein localises to the golgi apparatus. The protein is Protein PRRC1-A (prrc1-a) of Xenopus laevis (African clawed frog).